The primary structure comprises 69 residues: Putative membrane protein insertion efficiency factor (69 aa).

The protein belongs to the UPF0161 family.

The protein localises to the cell inner membrane. Its function is as follows. Could be involved in insertion of integral membrane proteins into the membrane. This Azoarcus sp. (strain BH72) protein is Putative membrane protein insertion efficiency factor.